Reading from the N-terminus, the 354-residue chain is Uroporphyrinogen decarboxylase (354 aa).

Substrate-binding positions include 27–31, D77, Y153, T208, and H326; that span reads RQAGR.

It belongs to the uroporphyrinogen decarboxylase family. In terms of assembly, homodimer.

The protein localises to the cytoplasm. It carries out the reaction uroporphyrinogen III + 4 H(+) = coproporphyrinogen III + 4 CO2. It participates in porphyrin-containing compound metabolism; protoporphyrin-IX biosynthesis; coproporphyrinogen-III from 5-aminolevulinate: step 4/4. In terms of biological role, catalyzes the decarboxylation of four acetate groups of uroporphyrinogen-III to yield coproporphyrinogen-III. In Neisseria gonorrhoeae (strain NCCP11945), this protein is Uroporphyrinogen decarboxylase.